Consider the following 158-residue polypeptide: Non-secretory ribonuclease (158 aa).

The N-terminal stretch at 1–27 is a signal peptide; the sequence is MVPKLFTSQICLLLLLGLSSLEVSLHA. A C-linked (Man) tryptophan glycan is attached at tryptophan 34. The active-site Proton acceptor is the histidine 42. Tyrosine 60 bears the 3'-nitrotyrosine mark. 65-69 provides a ligand contact to substrate; the sequence is KNRNT. N-linked (GlcNAc...) asparagine glycans are attached at residues asparagine 86, asparagine 92, and asparagine 111. The active-site Proton donor is the histidine 153.

It belongs to the pancreatic ribonuclease family. In terms of assembly, interacts with and forms a tight 1:1 complex with RNH1. Dimerization of two such complexes may occur.

It localises to the lysosome. The protein resides in the cytoplasmic granule. The catalysed reaction is an [RNA] containing cytidine + H2O = an [RNA]-3'-cytidine-3'-phosphate + a 5'-hydroxy-ribonucleotide-3'-[RNA].. It catalyses the reaction an [RNA] containing uridine + H2O = an [RNA]-3'-uridine-3'-phosphate + a 5'-hydroxy-ribonucleotide-3'-[RNA].. Functionally, this is a non-secretory ribonuclease. It is a pyrimidine specific nuclease with a slight preference for U. Cytotoxin and helminthotoxin. Possesses a wide variety of biological activities. This chain is Non-secretory ribonuclease (RNASE2), found in Saguinus labiatus (Red-chested mustached tamarin).